A 514-amino-acid chain; its full sequence is Arabinose import ATP-binding protein AraG (514 aa).

2 ABC transporter domains span residues 16 to 251 and 251 to 507; these read LRFN…MVGR and RDIQ…LPRH. 48 to 55 is a binding site for ATP; the sequence is GENGAGKS.

It belongs to the ABC transporter superfamily. Arabinose importer (TC 3.A.1.2.2) family. In terms of assembly, the complex is composed of two ATP-binding proteins (AraG), two transmembrane proteins (AraH) and a solute-binding protein (AraF).

The protein localises to the cell inner membrane. The enzyme catalyses L-arabinose(out) + ATP + H2O = L-arabinose(in) + ADP + phosphate + H(+). Functionally, part of the ABC transporter complex AraFGH involved in arabinose import. Responsible for energy coupling to the transport system. This Pseudomonas fluorescens (strain Pf0-1) protein is Arabinose import ATP-binding protein AraG.